The primary structure comprises 395 residues: S-adenosylmethionine synthase 2 (395 aa).

A Mg(2+)-binding site is contributed by E9. Position 15 (H15) interacts with ATP. E43 contacts K(+). L-methionine is bound by residues E56 and Q99. ATP contacts are provided by residues 167-169 (DGK), 235-238 (SGRF), D246, 252-253 (RK), A269, K273, and K277. D246 contributes to the L-methionine binding site. K277 serves as a coordination point for L-methionine.

It belongs to the AdoMet synthase family. As to quaternary structure, homotetramer. Mn(2+) serves as cofactor. The cofactor is Mg(2+). Co(2+) is required as a cofactor. It depends on K(+) as a cofactor.

It localises to the cytoplasm. The enzyme catalyses L-methionine + ATP + H2O = S-adenosyl-L-methionine + phosphate + diphosphate. The protein operates within amino-acid biosynthesis; S-adenosyl-L-methionine biosynthesis; S-adenosyl-L-methionine from L-methionine: step 1/1. Catalyzes the formation of S-adenosylmethionine from methionine and ATP. The reaction comprises two steps that are both catalyzed by the same enzyme: formation of S-adenosylmethionine (AdoMet) and triphosphate, and subsequent hydrolysis of the triphosphate. The sequence is that of S-adenosylmethionine synthase 2 (METK2) from Suaeda salsa (Seepweed).